Here is a 609-residue protein sequence, read N- to C-terminus: UvrABC system protein C (609 aa).

Residues 16–94 enclose the GIY-YIG domain; it reads SSAGVYRMYD…IKQYMPKYNV (79 aa). Residues 203 to 238 enclose the UVR domain; it reads QQVISTLVAKMEQAAQQQEYEQAARFRDQIMALRKV.

It belongs to the UvrC family. In terms of assembly, interacts with UvrB in an incision complex.

Its subcellular location is the cytoplasm. The UvrABC repair system catalyzes the recognition and processing of DNA lesions. UvrC both incises the 5' and 3' sides of the lesion. The N-terminal half is responsible for the 3' incision and the C-terminal half is responsible for the 5' incision. The protein is UvrABC system protein C of Shewanella putrefaciens (strain CN-32 / ATCC BAA-453).